The sequence spans 429 residues: Serine--tRNA ligase (429 aa).

236-238 (TAE) lines the L-serine pocket. ATP is bound at residue 267 to 269 (RRE). Glutamate 290 lines the L-serine pocket. 354 to 357 (EISS) contributes to the ATP binding site. Serine 390 is a binding site for L-serine.

This sequence belongs to the class-II aminoacyl-tRNA synthetase family. Type-1 seryl-tRNA synthetase subfamily. Homodimer. The tRNA molecule binds across the dimer.

The protein localises to the cytoplasm. It catalyses the reaction tRNA(Ser) + L-serine + ATP = L-seryl-tRNA(Ser) + AMP + diphosphate + H(+). The catalysed reaction is tRNA(Sec) + L-serine + ATP = L-seryl-tRNA(Sec) + AMP + diphosphate + H(+). It functions in the pathway aminoacyl-tRNA biosynthesis; selenocysteinyl-tRNA(Sec) biosynthesis; L-seryl-tRNA(Sec) from L-serine and tRNA(Sec): step 1/1. Functionally, catalyzes the attachment of serine to tRNA(Ser). Is also able to aminoacylate tRNA(Sec) with serine, to form the misacylated tRNA L-seryl-tRNA(Sec), which will be further converted into selenocysteinyl-tRNA(Sec). The polypeptide is Serine--tRNA ligase (Gloeobacter violaceus (strain ATCC 29082 / PCC 7421)).